The following is a 470-amino-acid chain: 6-phospho-beta-galactosidase 1 (470 aa).

Residues Q23, H120, N163, E164, and N300 each contribute to the D-galactose 6-phosphate site. The Proton donor role is filled by E164. Residue E378 is the Nucleophile of the active site. Positions 434, 435, 441, and 443 each coordinate D-galactose 6-phosphate.

Belongs to the glycosyl hydrolase 1 family.

The enzyme catalyses a 6-phospho-beta-D-galactoside + H2O = D-galactose 6-phosphate + an alcohol. It participates in carbohydrate metabolism; lactose degradation; D-galactose 6-phosphate and beta-D-glucose from lactose 6-phosphate: step 1/1. This chain is 6-phospho-beta-galactosidase 1, found in Streptococcus pneumoniae serotype 4 (strain ATCC BAA-334 / TIGR4).